We begin with the raw amino-acid sequence, 254 residues long: Wall-associated protein (254 aa).

The tract at residues 25 to 46 is disordered; sequence DRVEPKEEPPKVPQAPKRDLKP.

It localises to the secreted. Its subcellular location is the cell wall. The protein is Wall-associated protein (wapA') of Geobacillus stearothermophilus (Bacillus stearothermophilus).